The chain runs to 389 residues: Cytochrome oxidase assembly protein SHY1 (389 aa).

The Mitochondrial matrix portion of the chain corresponds to 1-71; that stretch reads MSLLGARSTY…SRRERSFGKK (71 aa). A helical transmembrane segment spans residues 72–92; that stretch reads IVLGLMFAMPIISFYLGTWQV. At 93–341 the chain is on the mitochondrial intermembrane side; that stretch reads RRLKWKTKLI…KPTIDLKNNH (249 aa). A disordered region spans residues 292 to 311; the sequence is GTQAVDNNTSKPRSRQEMPT. The helical transmembrane segment at 342–362 threads the bilayer; that stretch reads LQYLVTWYGLSFLSTIFLIVA. Over 363 to 389 the chain is Mitochondrial matrix; sequence LRKAKRGGVVSQDQLMKEKLKHSRKYM.

Belongs to the SURF1 family. As to quaternary structure, interacts with COA1, COX14 and MSS51.

The protein resides in the mitochondrion inner membrane. In terms of biological role, required for efficient assembly of cytochrome c oxidase in the mitochondrial inner membrane. Involved in a step that couples MSS51-COX14-dependent regulation of COX1 translation to early steps of cytochrome c oxidase assembly. The protein is Cytochrome oxidase assembly protein SHY1 (SHY1) of Saccharomyces cerevisiae (strain ATCC 204508 / S288c) (Baker's yeast).